The sequence spans 400 residues: Nicotinate phosphoribosyltransferase (400 aa).

Residue His220 is modified to Phosphohistidine; by autocatalysis.

It belongs to the NAPRTase family. In terms of processing, transiently phosphorylated on a His residue during the reaction cycle. Phosphorylation strongly increases the affinity for substrates and increases the rate of nicotinate D-ribonucleotide production. Dephosphorylation regenerates the low-affinity form of the enzyme, leading to product release.

It catalyses the reaction nicotinate + 5-phospho-alpha-D-ribose 1-diphosphate + ATP + H2O = nicotinate beta-D-ribonucleotide + ADP + phosphate + diphosphate. It functions in the pathway cofactor biosynthesis; NAD(+) biosynthesis; nicotinate D-ribonucleotide from nicotinate: step 1/1. Catalyzes the synthesis of beta-nicotinate D-ribonucleotide from nicotinate and 5-phospho-D-ribose 1-phosphate at the expense of ATP. The sequence is that of Nicotinate phosphoribosyltransferase from Shigella dysenteriae serotype 1 (strain Sd197).